A 302-amino-acid chain; its full sequence is MMPIPATSTDSAAIPQTLLDAYALLAWRAMLTEVNLSPKPGLVDRINCGAHKDMALEDFHRSALAIQGWLPRFIEYGASCAQLPSDDVLKGLRPLGMACEADMFRATAGVNTHKGSIFSLGLLCAAIGRLHQQHSPITPANICSTAATFCRGLTERELRQNNQQLTAGQRLYQQLGLTGARGEAEAGYPLVIRHALPHYRALLAQGRDPELALLDTLLLLISMNGDTNVASRGGAEGLCWIQQQATTLLRQGGIRSPADLEHLHRFDQQCIARNLSPGGSADLLIVTWFLAQISQVNHLHNY.

It belongs to the CitG/MdcB family.

It carries out the reaction 3'-dephospho-CoA + ATP = 2'-(5''-triphospho-alpha-D-ribosyl)-3'-dephospho-CoA + adenine. This chain is Probable 2-(5''-triphosphoribosyl)-3'-dephosphocoenzyme-A synthase, found in Citrobacter koseri (strain ATCC BAA-895 / CDC 4225-83 / SGSC4696).